Reading from the N-terminus, the 674-residue chain is ATP-citrate synthase subunit 1 (674 aa).

Low complexity predominate over residues 1 to 10 (MPSATSTNGA). The tract at residues 1–26 (MPSATSTNGANGNGNGNGASASPAPG) is disordered. ATP-binding positions include 261–281 (LLRY…EVGG) and 312–338 (FKTE…KNKS). Position 278 (Glu278) interacts with Mg(2+). The Tele-phosphohistidine intermediate role is filled by His320. 339–349 (MREAGFYVPDT) serves as a coordination point for CoA.

This sequence belongs to the succinate/malate CoA ligase alpha subunit family. Composed of two subunits.

It localises to the cytoplasm. The enzyme catalyses oxaloacetate + acetyl-CoA + ADP + phosphate = citrate + ATP + CoA. Catalyzes the formation of cytosolic acetyl-CoA, which is mainly used for the biosynthesis of fatty acids and sterols. The chain is ATP-citrate synthase subunit 1 (ACL1) from Sordaria macrospora (strain ATCC MYA-333 / DSM 997 / K(L3346) / K-hell).